The following is a 202-amino-acid chain: dITP/XTP pyrophosphatase (202 aa).

8-13 provides a ligand contact to substrate; sequence TKNMGK. Residues glutamate 41 and aspartate 70 each coordinate Mg(2+). The Proton acceptor role is filled by aspartate 70. Substrate-binding positions include serine 71, 155-158, lysine 178, and 183-184; these read FGYD and HR.

Belongs to the HAM1 NTPase family. As to quaternary structure, homodimer. Mg(2+) serves as cofactor.

It carries out the reaction XTP + H2O = XMP + diphosphate + H(+). The enzyme catalyses dITP + H2O = dIMP + diphosphate + H(+). The catalysed reaction is ITP + H2O = IMP + diphosphate + H(+). In terms of biological role, pyrophosphatase that catalyzes the hydrolysis of nucleoside triphosphates to their monophosphate derivatives, with a high preference for the non-canonical purine nucleotides XTP (xanthosine triphosphate), dITP (deoxyinosine triphosphate) and ITP. Seems to function as a house-cleaning enzyme that removes non-canonical purine nucleotides from the nucleotide pool, thus preventing their incorporation into DNA/RNA and avoiding chromosomal lesions. This is dITP/XTP pyrophosphatase from Bacillus anthracis.